The sequence spans 456 residues: Protein shifted (456 aa).

An N-terminal signal peptide occupies residues 1–30; it reads MTHQGIGCLVKWLYLVLIVHTLLCIGQLEC. The disordered stretch occupies residues 34–112; sequence HHNRNNNNNN…GGGGSRHNRN (79 aa). The span at 44-55 shows a compositional bias: basic and acidic residues; that stretch reads RRADSSSSEEGH. N-linked (GlcNAc...) asparagine glycosylation is present at Asn-57. A compositionally biased stretch (basic residues) spans 77–87; it reads HQPRRGQRKKQ. Residues 88-107 show a composition bias toward gly residues; sequence QGGGGGGSGGGGGNGGGGGS. The region spanning 119-261 is the WIF domain; the sequence is LWINEQQLKM…PIRLNFKKEC (143 aa). N-linked (GlcNAc...) asparagine glycosylation is found at Asn-173, Asn-217, and Asn-227. 16 disulfide bridges follow: Cys-224–Cys-261, Cys-283–Cys-293, Cys-287–Cys-299, Cys-301–Cys-310, Cys-315–Cys-325, Cys-319–Cys-331, Cys-333–Cys-342, Cys-347–Cys-357, Cys-351–Cys-363, Cys-365–Cys-374, Cys-379–Cys-389, Cys-383–Cys-395, Cys-397–Cys-406, Cys-416–Cys-423, Cys-418–Cys-429, and Cys-431–Cys-440. EGF-like domains follow at residues 279–311, 315–342, 343–375, 376–407, and 412–441; these read TLQECSLKCGKNGYCNEHHICKCNVGYTGQYCE, CFPQCLNGGNCTAPSVCTCPEGYQGTQC, EGGICKDKCLNGGKCIQKDKCQCSKGYYGLRCE, YSKCVIPCKNEGRCIGNNLCRCPNGLRGDHCE, and QRSICKCRNGTCVSHKHCKCHPGFYGRHCN. A glycan (N-linked (GlcNAc...) asparagine) is linked at Asn-324. Asn-420 carries N-linked (GlcNAc...) asparagine glycosylation.

Interacts with hh. In terms of tissue distribution, at the blastoderm stage, it is ubiquitously expressed. As embryogenesis continues, it is expressed in the epidermis and central nervous system, this expression being segmentally modulated. Also highly expressed at the foregut and hindgut throughout embryogenesis. In third instar wing imaginal disks, it is highly expressed in the most anterior and posterior parts of the disk and weakly expressed at the antero/posterior (A/P) compartment border. In the leg disks and the antenna part of the eye-antennal imaginal disk it is also weakly expressed at the A/P compartment border. Weakly expressed in the morphogenetic furrow in the eye primordium.

The protein resides in the secreted. It localises to the extracellular space. The protein localises to the extracellular matrix. Functionally, required for normal accumulation and movement of lipid-modified hedgehog (hh) morphogen. May act by stabilizing the interaction between heparan sulfate proteoglycans (HSPGs) and hh, HSPGs being required for diffusion of hh morphogen. Not involved in wingless (wg) morphogen movement, suggesting that it may provide HSPG specificity for Hh. This chain is Protein shifted (shf), found in Drosophila melanogaster (Fruit fly).